The sequence spans 84 residues: Small ribosomal subunit protein bS18A (84 aa).

Belongs to the bacterial ribosomal protein bS18 family. Part of the 30S ribosomal subunit. Forms a tight heterodimer with protein bS6.

In terms of biological role, binds as a heterodimer with protein bS6 to the central domain of the 16S rRNA, where it helps stabilize the platform of the 30S subunit. This is Small ribosomal subunit protein bS18A from Frankia alni (strain DSM 45986 / CECT 9034 / ACN14a).